A 433-amino-acid polypeptide reads, in one-letter code: KH domain-containing, RNA-binding, signal transduction-associated protein 1 (433 aa).

A disordered region spans residues methionine 1–methionine 79. Residues glycine 41–alanine 76 are compositionally biased toward low complexity. An involved in homodimerization region spans residues glutamate 82–methionine 243. One can recognise a KH domain in the interval glutamine 171 to lysine 197. 3 disordered regions span residues glycine 259 to arginine 305, alanine 317 to proline 351, and glutamine 403 to tyrosine 433. The segment covering alanine 277–arginine 300 has biased composition (pro residues). Residues valine 329–isoleucine 342 show a composition bias toward low complexity. Basic and acidic residues predominate over residues alanine 424 to tyrosine 433.

It belongs to the KHDRBS family. In terms of assembly, self-associates to form homooligomers when bound to RNA, oligomerization appears to be limited when binding to proteins. Tyrosine phosphorylated by several non-receptor tyrosine kinases including LCK, FYN and JAK3. In terms of processing, acetylated. Positively correlates with ability to bind RNA. Post-translationally, methylated by HRMT1L2. Required for nuclear localization.

It localises to the nucleus. The protein resides in the cytoplasm. The protein localises to the membrane. Its function is as follows. Recruited and tyrosine phosphorylated by several receptor systems, for example the T-cell, leptin and insulin receptors. Once phosphorylated, functions as an adapter protein in signal transduction cascades by binding to SH2 and SH3 domain-containing proteins. Role in G2-M progression in the cell cycle. Represses CBP-dependent transcriptional activation apparently by competing with other nuclear factors for binding to CBP. Also acts as a putative regulator of mRNA stability and/or translation rates and mediates mRNA nuclear export. Plays a role in the regulation of alternative splicing and influences mRNA splice site selection and exon inclusion. The chain is KH domain-containing, RNA-binding, signal transduction-associated protein 1 from Gallus gallus (Chicken).